The sequence spans 118 residues: Myotrophin (118 aa).

3 ANK repeats span residues 1 to 30 (MGDK…DVNR), 34 to 65 (GGRK…NAAD), and 67 to 98 (HGIT…TVKG).

The protein belongs to the myotrophin family.

It localises to the cytoplasm. It is found in the nucleus. The protein localises to the perinuclear region. Functionally, regulates NF-kappa-B transcription factor activity. Promotes growth of cardiomyocytes, but not cardiomyocyte proliferation. Promotes cardiac muscle hypertrophy. Plays a role in the regulation of the growth of actin filaments. Inhibits the activity of the F-actin-capping protein complex. The chain is Myotrophin (mtpn) from Xenopus tropicalis (Western clawed frog).